The sequence spans 193 residues: Lipopolysaccharide core heptose(II)-phosphate phosphatase (193 aa).

The first 25 residues, 1–25 (MKLKKHVAVLLISFLCLIGLVTQHA), serve as a signal peptide directing secretion.

The protein belongs to the phosphoglycerate mutase family. Ais subfamily.

The protein localises to the periplasm. The protein operates within bacterial outer membrane biogenesis; lipopolysaccharide metabolism. In terms of biological role, catalyzes the dephosphorylation of heptose(II) of the outer membrane lipopolysaccharide core. The sequence is that of Lipopolysaccharide core heptose(II)-phosphate phosphatase from Escherichia fergusonii (strain ATCC 35469 / DSM 13698 / CCUG 18766 / IAM 14443 / JCM 21226 / LMG 7866 / NBRC 102419 / NCTC 12128 / CDC 0568-73).